The chain runs to 420 residues: ATP phosphoribosyltransferase regulatory subunit (420 aa).

The protein belongs to the class-II aminoacyl-tRNA synthetase family. HisZ subfamily. Heteromultimer composed of HisG and HisZ subunits.

It localises to the cytoplasm. It functions in the pathway amino-acid biosynthesis; L-histidine biosynthesis; L-histidine from 5-phospho-alpha-D-ribose 1-diphosphate: step 1/9. Its function is as follows. Required for the first step of histidine biosynthesis. May allow the feedback regulation of ATP phosphoribosyltransferase activity by histidine. This chain is ATP phosphoribosyltransferase regulatory subunit, found in Bacillus cereus (strain AH187).